A 124-amino-acid polypeptide reads, in one-letter code: Small ribosomal subunit protein uS12 (124 aa).

D89 is modified (3-methylthioaspartic acid). The tract at residues 104–124 (TDGVENRKQSRSKYGTKRPKK) is disordered. Basic residues predominate over residues 112-124 (QSRSKYGTKRPKK).

This sequence belongs to the universal ribosomal protein uS12 family. As to quaternary structure, part of the 30S ribosomal subunit. Contacts proteins S8 and S17. May interact with IF1 in the 30S initiation complex.

In terms of biological role, with S4 and S5 plays an important role in translational accuracy. Functionally, interacts with and stabilizes bases of the 16S rRNA that are involved in tRNA selection in the A site and with the mRNA backbone. Located at the interface of the 30S and 50S subunits, it traverses the body of the 30S subunit contacting proteins on the other side and probably holding the rRNA structure together. The combined cluster of proteins S8, S12 and S17 appears to hold together the shoulder and platform of the 30S subunit. This Thermosipho melanesiensis (strain DSM 12029 / CIP 104789 / BI429) protein is Small ribosomal subunit protein uS12.